We begin with the raw amino-acid sequence, 183 residues long: uncharacterized protein (183 aa).

A helical membrane pass occupies residues 7-23 (LFFTALCFGLTGCIAPP).

The protein resides in the membrane. This is an uncharacterized protein from Haemophilus influenzae (strain ATCC 51907 / DSM 11121 / KW20 / Rd).